Reading from the N-terminus, the 590-residue chain is Beta-fructofuranosidase, insoluble isoenzyme 4 (590 aa).

Positions 1 to 28 (MVMAPIPQPWHQWPFLILFFLVLFSCES) are cleaved as a signal peptide. Substrate is bound by residues 71–74 (WIND) and Gln-90. Residue Asp-74 is part of the active site. A glycan (N-linked (GlcNAc...) asparagine) is linked at Asn-94. Substrate is bound by residues Trp-98 and 133-134 (WT). N-linked (GlcNAc...) asparagine glycosylation occurs at Asn-167. Position 198–199 (198–199 (RD)) interacts with substrate. Asn-247 carries N-linked (GlcNAc...) asparagine glycosylation. Substrate is bound by residues Glu-253 and Asp-287. A glycan (N-linked (GlcNAc...) asparagine) is linked at Asn-345. Cys-445 and Cys-491 are disulfide-bonded. The N-linked (GlcNAc...) asparagine glycan is linked to Asn-565.

This sequence belongs to the glycosyl hydrolase 32 family. As to expression, expressed in leaves. Expressed at moderate levels in roots and flowers, and weakly in seeds.

The protein localises to the secreted. Its subcellular location is the extracellular space. It is found in the apoplast. It localises to the cell wall. The enzyme catalyses Hydrolysis of terminal non-reducing beta-D-fructofuranoside residues in beta-D-fructofuranosides.. Functionally, may play a role in sucrose partitioning during seed development and in stress response. The polypeptide is Beta-fructofuranosidase, insoluble isoenzyme 4 (CIN4) (Oryza sativa subsp. japonica (Rice)).